Consider the following 277-residue polypeptide: uncharacterized protein (277 aa).

7 helical membrane-spanning segments follow: residues cysteine 23–isoleucine 43, phenylalanine 61–glycine 81, leucine 117–phenylalanine 137, isoleucine 144–leucine 164, tyrosine 197–leucine 217, isoleucine 221–isoleucine 241, and isoleucine 243–isoleucine 263.

The protein to M.jannaschii MJ1189.

The protein localises to the cell membrane. This is an uncharacterized protein from Methanocaldococcus jannaschii (strain ATCC 43067 / DSM 2661 / JAL-1 / JCM 10045 / NBRC 100440) (Methanococcus jannaschii).